The following is a 450-amino-acid chain: Large terminase protein homolog UL15b (450 aa).

This sequence belongs to the herpesviridae large terminase family.

In Psittacid herpesvirus 1 (isolate Amazon parrot/-/97-0001/1997) (PsHV-1), this protein is Large terminase protein homolog UL15b (UL15b).